Reading from the N-terminus, the 324-residue chain is Antihemorrhagic factor jMSF (324 aa).

The first 19 residues, 1–19 (MHFLVALVLLGQIIGSTLS), serve as a signal peptide directing secretion. 2 Cystatin fetuin-A-type domains span residues 22-130 (VRGD…VKCH) and 141-254 (RNCP…SDCV). The short motif at 23 to 25 (RGD) is the Cell attachment site element. 7 disulfide bridges follow: cysteine 28–cysteine 315, cysteine 85–cysteine 96, cysteine 110–cysteine 129, cysteine 143–cysteine 146, cysteine 205–cysteine 217, cysteine 230–cysteine 253, and cysteine 287–cysteine 291. Residue asparagine 204 is glycosylated (N-linked (GlcNAc...) asparagine). N-linked (GlcNAc...) asparagine glycosylation occurs at asparagine 282.

Homodimer. Expressed by the liver.

Its subcellular location is the secreted. In terms of biological role, suppress hemorrhage induced by metalloproteinases from the same venom (brevilysin-H3, -H4, -H6) and from habu venom (weak inhibition of the metalloproteinases HR2A). The non-hemorrhagic brevilysin-H2 is strongly inhibited by jMSF, whereas the brevilysin-L6 is not inhibited. Does not inhibit serine and cysteine proteases such as trypsin, chymotrypsin, thermolysin, and papain. The inhibition may occur by formation of a non-covalent complex between this protein and the proteinases at their metalloproteinase domains. This Gloydius blomhoffii (Mamushi) protein is Antihemorrhagic factor jMSF.